Here is an 83-residue protein sequence, read N- to C-terminus: Disintegrin bitistatin (83 aa).

The region spanning 2–83 is the Disintegrin domain; it reads PPVCGNKILE…GKSSDCPWNH (82 aa). Cystine bridges form between C5–C24, C5–C34, C16–C29, C16–C34, C18–C24, C18–C29, C28–C51, C42–C48, C47–C72, and C60–C79. The Cell attachment site motif lies at 64 to 66; sequence RGD.

Belongs to the venom metalloproteinase (M12B) family. P-II subfamily. P-IIa sub-subfamily. In terms of assembly, monomer. Post-translationally, exists in 3 forms in the venom. The forms A, B, and C are present at 53%, 32% and 15%. The forms A and B differ by their disulfide bond pattern in the N-terminal part. No information is known about form C. Expressed by the venom gland.

Its subcellular location is the secreted. Its function is as follows. Inhibits fibrinogen interaction with platelets. Acts by binding to alpha-IIb/beta-3 (ITGA2B/ITGB3) on the platelet surface and inhibits aggregation induced by ADP, thrombin, platelet-activating factor and collagen. The polypeptide is Disintegrin bitistatin (Bitis arietans (African puff adder)).